The sequence spans 450 residues: Phosphoglucosamine mutase (450 aa).

Serine 101 serves as the catalytic Phosphoserine intermediate. Residues serine 101, aspartate 241, aspartate 243, and aspartate 245 each contribute to the Mg(2+) site. Phosphoserine is present on serine 101.

It belongs to the phosphohexose mutase family. It depends on Mg(2+) as a cofactor. Post-translationally, activated by phosphorylation.

It catalyses the reaction alpha-D-glucosamine 1-phosphate = D-glucosamine 6-phosphate. Its function is as follows. Catalyzes the conversion of glucosamine-6-phosphate to glucosamine-1-phosphate. The polypeptide is Phosphoglucosamine mutase (Listeria welshimeri serovar 6b (strain ATCC 35897 / DSM 20650 / CCUG 15529 / CIP 8149 / NCTC 11857 / SLCC 5334 / V8)).